Reading from the N-terminus, the 216-residue chain is Uracil phosphoribosyltransferase (216 aa).

5-phospho-alpha-D-ribose 1-diphosphate contacts are provided by residues Arg85, Arg110, and 135-143 (DPMVATGYS). Uracil contacts are provided by residues Ile200 and 205-207 (GDA). Residue Asp206 coordinates 5-phospho-alpha-D-ribose 1-diphosphate.

The protein belongs to the UPRTase family. Mg(2+) serves as cofactor.

The enzyme catalyses UMP + diphosphate = 5-phospho-alpha-D-ribose 1-diphosphate + uracil. The protein operates within pyrimidine metabolism; UMP biosynthesis via salvage pathway; UMP from uracil: step 1/1. With respect to regulation, allosterically activated by GTP. In terms of biological role, catalyzes the conversion of uracil and 5-phospho-alpha-D-ribose 1-diphosphate (PRPP) to UMP and diphosphate. The sequence is that of Uracil phosphoribosyltransferase from Burkholderia mallei (strain NCTC 10247).